Reading from the N-terminus, the 218-residue chain is uncharacterized protein (218 aa).

The tract at residues 1–24 is disordered; it reads MAAQPQAPSAGGRPRAGKAVKSVA. Positions 28–88 constitute an HTH tetR-type domain; sequence KLSRESIVEG…AVRIRVIDDI (61 aa). Residues 51 to 70 constitute a DNA-binding region (H-T-H motif); the sequence is TINALATQLGTKGPSLYNHV. Thr-57 carries the phosphothreonine; by PknH modification.

Phosphorylated on Thr-57 by PknH.

This is an uncharacterized protein from Mycobacterium tuberculosis (strain ATCC 25618 / H37Rv).